A 291-amino-acid polypeptide reads, in one-letter code: Short-chain dehydrogenase/reductase GME11359 (291 aa).

Residues L18, D67, N96, Y177, K181, and V209 each coordinate NADP(+). Catalysis depends on Y177, which acts as the Proton acceptor. K181 serves as the catalytic Lowers pKa of active site Tyr.

The protein belongs to the short-chain dehydrogenases/reductases (SDR) family.

The protein operates within secondary metabolite biosynthesis. Its function is as follows. Short-chain dehydrogenase/reductase; part of the gene cluster that mediates the biosynthesis of dibenzodioxocinones such as pestalotiollide B, a novel class of inhibitors against cholesterol ester transfer protein (CEPT). The biosynthesis initiates from condensation of acetate and malonate units catalyzed by the non-reducing PKS pks8/GME11356. Pks8/GME11356 lacks a thioesterase (TE) domain, which is important to the cyclizing of the third ring of atrochrysone carboxylic acid, and the esterase GME11355 might play the role of TE and catalyzes the cyclization reaction of the C ring. The lactamase-like protein GME11357 (or other beta-lactamases in Pestalotiopsis microspora) probably hydrolyzes the thioester bond between the ACP of pks8/GME11356 and the intermediate to release atrochrysone carboxylic acid, which is spontaneously dehydrates to form endocrocin anthrone. Endocrocin anthrone is further converted to emodin via the endocrocin intermediate. Emodin is then oxidized by several enzymes such as the Baeyer-Villiger oxidase GME11358, the oxidoreductase GME11367, the short chain dehydrogenase/reductase GME11373, as well as by other oxidoreductases from the cluster, to modify the A and C rings and open the B ring, and finally yield monodictyphenone. The prenyltransferase GME11375 may catalyze the addition reaction between the C5 side chains and the carbon bone of dibenzodioxocinones. The remaining biochemical reactions to the final product dibenzodioxocinones should be methylation catalyzed by methyltransferase GME11366 and reduction and lactonization reaction catalyzed by a series of oxidordeuctases. This chain is Short-chain dehydrogenase/reductase GME11359, found in Pestalotiopsis microspora.